Consider the following 304-residue polypeptide: Acetylglutamate kinase (304 aa).

Substrate contacts are provided by residues 70–71 (GG), Arg-92, and Asn-196.

The protein belongs to the acetylglutamate kinase family. ArgB subfamily.

The protein localises to the cytoplasm. It catalyses the reaction N-acetyl-L-glutamate + ATP = N-acetyl-L-glutamyl 5-phosphate + ADP. It participates in amino-acid biosynthesis; L-arginine biosynthesis; N(2)-acetyl-L-ornithine from L-glutamate: step 2/4. Functionally, catalyzes the ATP-dependent phosphorylation of N-acetyl-L-glutamate. The protein is Acetylglutamate kinase of Methanococcoides burtonii (strain DSM 6242 / NBRC 107633 / OCM 468 / ACE-M).